Reading from the N-terminus, the 940-residue chain is Isoleucine--tRNA ligase (940 aa).

The short motif at 58–68 (PYANGSIHIGH) is the 'HIGH' region element. Residue Glu564 coordinates L-isoleucyl-5'-AMP. The short motif at 605–609 (KMSKS) is the 'KMSKS' region element. Lys608 lines the ATP pocket. The Zn(2+) site is built by Cys903, Cys906, Cys923, and Cys926.

It belongs to the class-I aminoacyl-tRNA synthetase family. IleS type 1 subfamily. In terms of assembly, monomer. The cofactor is Zn(2+).

It is found in the cytoplasm. It carries out the reaction tRNA(Ile) + L-isoleucine + ATP = L-isoleucyl-tRNA(Ile) + AMP + diphosphate. In terms of biological role, catalyzes the attachment of isoleucine to tRNA(Ile). As IleRS can inadvertently accommodate and process structurally similar amino acids such as valine, to avoid such errors it has two additional distinct tRNA(Ile)-dependent editing activities. One activity is designated as 'pretransfer' editing and involves the hydrolysis of activated Val-AMP. The other activity is designated 'posttransfer' editing and involves deacylation of mischarged Val-tRNA(Ile). This Shewanella baltica (strain OS223) protein is Isoleucine--tRNA ligase.